Reading from the N-terminus, the 263-residue chain is Tropinone reductase homolog At2g29300 (263 aa).

13 to 37 (LVTGAASGIGYAIVEELAGFGARIH) is a binding site for NADP(+). Serine 146 provides a ligand contact to substrate. The active-site Proton acceptor is tyrosine 160.

The protein belongs to the short-chain dehydrogenases/reductases (SDR) family. SDR65C subfamily.

This chain is Tropinone reductase homolog At2g29300, found in Arabidopsis thaliana (Mouse-ear cress).